A 67-amino-acid chain; its full sequence is MGMRMMFTVFLLVALATTVVSFTSDRASDRRNAAVKAFDLISSTVKKGCCSHPACSGNNPEYCRQGR.

A signal peptide spans 1–21; sequence MGMRMMFTVFLLVALATTVVS. Residues 22-47 constitute a propeptide that is removed on maturation; it reads FTSDRASDRRNAAVKAFDLISSTVKK. Intrachain disulfides connect Cys-49–Cys-55 and Cys-50–Cys-63. A Glutamine amide modification is found at Gln-65.

It belongs to the conotoxin A superfamily. Expressed by the venom duct.

It is found in the secreted. Alpha-conotoxins act on postsynaptic membranes, they bind to the nicotinic acetylcholine receptors (nAChR) and thus inhibit them. Globular isomer (C1-C3; C2-C4) selectively inhibits neuronal (non-muscle) nAChR subtypes particularly human alpha-3-beta-2/CHRNA3-CHRNB2 (IC(50)=35.7 nM) and alpha-9-alpha-10/CHRNA9-CHRNA10 nAChRs (IC(50)=569 nM), while the ribbon isomer (C1-C4; C2-C3) shows weak inhibition on alpha-3-beta-2/CHRNA3-CHRNB2, but not on all other receptors tested. This chain is Alpha-conotoxin G1.5, found in Conus geographus (Geography cone).